The following is a 527-amino-acid chain: Protein IQ-DOMAIN 4 (527 aa).

Residues 13–90 (CLSPGKDKKN…PPSPPPPPPA (78 aa)) are disordered. Over residues 17 to 26 (GKDKKNQKPE) the composition is skewed to basic and acidic residues. Over residues 63 to 90 (PYPPPPPLPDFAPQPLLPPPSPPPPPPA) the composition is skewed to pro residues. The 29-residue stretch at 147–175 (EETAAIKIQNAYRCYTARRTLRALRGMAR) folds into the IQ domain. The interval 256–273 (RSVNRKEASVRRERALAY) is calmodulin-binding. Residues 323–527 (VSVKSSLKRE…EKKRRNGGSS (205 aa)) form a disordered region. Residues 335 to 360 (IKSSPARSKTQKSASQSSIQWPVNND) are compositionally biased toward polar residues. A compositionally biased stretch (basic and acidic residues) spans 361 to 370 (TKSRKIEVTN). Composition is skewed to polar residues over residues 399–422 (LDNT…NAQT) and 437–455 (NTKT…NLAN). Positions 471-481 (PKKEVVADKKK) are enriched in basic and acidic residues. Positions 478–485 (DKKKPPQM) match the Nuclear localization signal motif.

This sequence belongs to the IQD family. In terms of assembly, binds to multiple calmodulin (CaM) in the presence of Ca(2+) and CaM-like proteins.

It localises to the nucleus. The protein resides in the nucleolus. Its function is as follows. May be involved in cooperative interactions with calmodulins or calmodulin-like proteins. Recruits calmodulin proteins to microtubules, thus being a potential scaffold in cellular signaling and trafficking. May associate with nucleic acids and regulate gene expression at the transcriptional or post-transcriptional level. This Arabidopsis thaliana (Mouse-ear cress) protein is Protein IQ-DOMAIN 4.